The following is a 409-amino-acid chain: Peptidase T (409 aa).

Residue H80 participates in Zn(2+) binding. D82 is a catalytic residue. A Zn(2+)-binding site is contributed by D143. The active-site Proton acceptor is the E177. Zn(2+) is bound by residues E178, D200, and H382.

It belongs to the peptidase M20B family. Zn(2+) is required as a cofactor.

The protein resides in the cytoplasm. It catalyses the reaction Release of the N-terminal residue from a tripeptide.. Its function is as follows. Cleaves the N-terminal amino acid of tripeptides. The chain is Peptidase T from Alkaliphilus oremlandii (strain OhILAs) (Clostridium oremlandii (strain OhILAs)).